Consider the following 130-residue polypeptide: Small ribosomal subunit protein uS9 (130 aa).

Over residues 101–110 the composition is skewed to basic and acidic residues; the sequence is AGFLTRDPRM. Residues 101–130 form a disordered region; the sequence is AGFLTRDPRMKERKKYGLKKARRAPQFSKR. Residues 111 to 130 show a composition bias toward basic residues; sequence KERKKYGLKKARRAPQFSKR.

Belongs to the universal ribosomal protein uS9 family.

In Clostridium tetani (strain Massachusetts / E88), this protein is Small ribosomal subunit protein uS9.